Reading from the N-terminus, the 189-residue chain is dCTP deaminase (189 aa).

Residues 112–117, 136–138, Gln-157, Tyr-171, and Gln-181 contribute to the dCTP site; these read KSTYAR and TLE. Glu-138 serves as the catalytic Proton donor/acceptor.

Belongs to the dCTP deaminase family. In terms of assembly, homotrimer.

The enzyme catalyses dCTP + H2O + H(+) = dUTP + NH4(+). Its pathway is pyrimidine metabolism; dUMP biosynthesis; dUMP from dCTP (dUTP route): step 1/2. In terms of biological role, catalyzes the deamination of dCTP to dUTP. In Paraburkholderia phymatum (strain DSM 17167 / CIP 108236 / LMG 21445 / STM815) (Burkholderia phymatum), this protein is dCTP deaminase.